The primary structure comprises 125 residues: MSRISNVNVPTNKRVMIGLTYIYGIGRSTAQKICQEVQVSVNKKVKDLSNQELVALRSIIESKYKVEGDLRREINLNIKKKKDIRCYEGLRHIRKLPVRGQNTHSNARTRKGKAIAIAGKKKPNK.

This sequence belongs to the universal ribosomal protein uS13 family. Part of the 30S ribosomal subunit. Forms a loose heterodimer with protein S19. Forms two bridges to the 50S subunit in the 70S ribosome.

Its function is as follows. Located at the top of the head of the 30S subunit, it contacts several helices of the 16S rRNA. In the 70S ribosome it contacts the 23S rRNA (bridge B1a) and protein L5 of the 50S subunit (bridge B1b), connecting the 2 subunits; these bridges are implicated in subunit movement. Contacts the tRNAs in the A and P-sites. This chain is Small ribosomal subunit protein uS13, found in Orientia tsutsugamushi (strain Boryong) (Rickettsia tsutsugamushi).